The chain runs to 100 residues: Small ribosomal subunit protein uS14 (100 aa).

It belongs to the universal ribosomal protein uS14 family. In terms of assembly, part of the 30S ribosomal subunit. Contacts proteins S3 and S10.

Functionally, binds 16S rRNA, required for the assembly of 30S particles and may also be responsible for determining the conformation of the 16S rRNA at the A site. The sequence is that of Small ribosomal subunit protein uS14 from Prochlorococcus marinus (strain NATL2A).